The primary structure comprises 176 residues: Peptidoglycan-associated lipoprotein (176 aa).

An N-terminal signal peptide occupies residues 1–21 (MKAGSFYKLGLLVASAVLVAA). A lipid anchor (N-palmitoyl cysteine) is attached at cysteine 22. A lipid anchor (S-diacylglycerol cysteine) is attached at cysteine 22. Residues 60–176 (YTTQAPHNQL…RVEFIYEATR (117 aa)) enclose the OmpA-like domain.

Belongs to the Pal lipoprotein family. As to quaternary structure, the Tol-Pal system is composed of five core proteins: the inner membrane proteins TolA, TolQ and TolR, the periplasmic protein TolB and the outer membrane protein Pal. They form a network linking the inner and outer membranes and the peptidoglycan layer.

Its subcellular location is the cell outer membrane. In terms of biological role, part of the Tol-Pal system, which plays a role in outer membrane invagination during cell division and is important for maintaining outer membrane integrity. Very strongly associated with the peptidoglycan. The sequence is that of Peptidoglycan-associated lipoprotein from Legionella pneumophila.